The sequence spans 689 residues: Glycine--tRNA ligase beta subunit (689 aa).

Belongs to the class-II aminoacyl-tRNA synthetase family. Tetramer of two alpha and two beta subunits.

It is found in the cytoplasm. The catalysed reaction is tRNA(Gly) + glycine + ATP = glycyl-tRNA(Gly) + AMP + diphosphate. The protein is Glycine--tRNA ligase beta subunit of Pectobacterium carotovorum subsp. carotovorum (strain PC1).